Consider the following 236-residue polypeptide: Phosphoribosylaminoimidazole-succinocarboxamide synthase (236 aa).

It belongs to the SAICAR synthetase family.

It catalyses the reaction 5-amino-1-(5-phospho-D-ribosyl)imidazole-4-carboxylate + L-aspartate + ATP = (2S)-2-[5-amino-1-(5-phospho-beta-D-ribosyl)imidazole-4-carboxamido]succinate + ADP + phosphate + 2 H(+). It participates in purine metabolism; IMP biosynthesis via de novo pathway; 5-amino-1-(5-phospho-D-ribosyl)imidazole-4-carboxamide from 5-amino-1-(5-phospho-D-ribosyl)imidazole-4-carboxylate: step 1/2. This chain is Phosphoribosylaminoimidazole-succinocarboxamide synthase, found in Pseudomonas putida (strain W619).